The following is a 240-amino-acid chain: MNAEKSPVNHNVDHKEIAKFEAVASRWWDLEGEFKPLHRINPLRLGYIAERAGGLFGKKVLDVGCGGGILAESMAREGATVTGLDMGFEPLQVAKLHALESGIQVDYVQETVEEHAAKHAGQYDVVTCMEMLEHVPDPQSVVRACAQLVKPGGDVFFSTLNRNGKSWLMAVVGAEYILRMVPKGTHDVKKFIKPAELLGWVDQTSLKERHMTGLHYNPITNSFKLGPGVDVNYMLHTQNK.

Positions 44, 64, 85, and 129 each coordinate S-adenosyl-L-methionine.

The protein belongs to the methyltransferase superfamily. UbiG/COQ3 family.

It carries out the reaction a 3-demethylubiquinol + S-adenosyl-L-methionine = a ubiquinol + S-adenosyl-L-homocysteine + H(+). The enzyme catalyses a 3-(all-trans-polyprenyl)benzene-1,2-diol + S-adenosyl-L-methionine = a 2-methoxy-6-(all-trans-polyprenyl)phenol + S-adenosyl-L-homocysteine + H(+). It participates in cofactor biosynthesis; ubiquinone biosynthesis. O-methyltransferase that catalyzes the 2 O-methylation steps in the ubiquinone biosynthetic pathway. In Escherichia coli O81 (strain ED1a), this protein is Ubiquinone biosynthesis O-methyltransferase.